Reading from the N-terminus, the 137-residue chain is Peptide methionine sulfoxide reductase MsrB (137 aa).

One can recognise a MsrB domain in the interval 7–129; sequence PGELKNGLSE…NSASLSFTDE (123 aa). Residues C46, C49, C95, and C98 each coordinate Zn(2+). The active-site Nucleophile is C118.

Belongs to the MsrB Met sulfoxide reductase family. Zn(2+) is required as a cofactor.

It carries out the reaction L-methionyl-[protein] + [thioredoxin]-disulfide + H2O = L-methionyl-(R)-S-oxide-[protein] + [thioredoxin]-dithiol. The sequence is that of Peptide methionine sulfoxide reductase MsrB from Klebsiella pneumoniae (strain 342).